Consider the following 811-residue polypeptide: Glycerol-3-phosphate acyltransferase (811 aa).

The HXXXXD motif motif lies at 303–308 (CHRSHM).

It belongs to the GPAT/DAPAT family.

The protein localises to the cell inner membrane. It catalyses the reaction sn-glycerol 3-phosphate + an acyl-CoA = a 1-acyl-sn-glycero-3-phosphate + CoA. Its pathway is phospholipid metabolism; CDP-diacylglycerol biosynthesis; CDP-diacylglycerol from sn-glycerol 3-phosphate: step 1/3. This chain is Glycerol-3-phosphate acyltransferase, found in Glaesserella parasuis serovar 5 (strain SH0165) (Haemophilus parasuis).